A 369-amino-acid polypeptide reads, in one-letter code: Molybdenum import ATP-binding protein ModC 1 (369 aa).

In terms of domain architecture, ABC transporter spans 10-240 (KGYIEVAFNG…PALASRSEAA (231 aa)). 42-49 (GPPGCGKT) contributes to the ATP binding site. One can recognise a Mop domain in the interval 297-367 (ASSILNVFRA…ELCGKLGDDG (71 aa)).

This sequence belongs to the ABC transporter superfamily. Molybdate importer (TC 3.A.1.8) family. In terms of assembly, the complex is composed of two ATP-binding proteins (ModC), two transmembrane proteins (ModB) and a solute-binding protein (ModA).

The protein resides in the cell inner membrane. It carries out the reaction molybdate(out) + ATP + H2O = molybdate(in) + ADP + phosphate + H(+). In terms of biological role, part of the ABC transporter complex ModABC involved in molybdenum import. Responsible for energy coupling to the transport system. This chain is Molybdenum import ATP-binding protein ModC 1, found in Bradyrhizobium diazoefficiens (strain JCM 10833 / BCRC 13528 / IAM 13628 / NBRC 14792 / USDA 110).